The chain runs to 285 residues: Ribosomal RNA small subunit methyltransferase A (285 aa).

6 residues coordinate S-adenosyl-L-methionine: Asn21, Leu23, Gly48, Glu69, Asp94, and Asn127.

This sequence belongs to the class I-like SAM-binding methyltransferase superfamily. rRNA adenine N(6)-methyltransferase family. RsmA subfamily.

Its subcellular location is the cytoplasm. It catalyses the reaction adenosine(1518)/adenosine(1519) in 16S rRNA + 4 S-adenosyl-L-methionine = N(6)-dimethyladenosine(1518)/N(6)-dimethyladenosine(1519) in 16S rRNA + 4 S-adenosyl-L-homocysteine + 4 H(+). Specifically dimethylates two adjacent adenosines (A1518 and A1519) in the loop of a conserved hairpin near the 3'-end of 16S rRNA in the 30S particle. May play a critical role in biogenesis of 30S subunits. This is Ribosomal RNA small subunit methyltransferase A from Koribacter versatilis (strain Ellin345).